The following is a 400-amino-acid chain: Formate-dependent phosphoribosylglycinamide formyltransferase (400 aa).

N(1)-(5-phospho-beta-D-ribosyl)glycinamide contacts are provided by residues 21–22 (EL) and glutamate 81. Residues arginine 114, lysine 155, 160–165 (SSGKGQ), 195–198 (EGRI), and glutamate 203 each bind ATP. The ATP-grasp domain maps to 119 to 313 (RLAAEKLGLP…EFELHVRAIL (195 aa)). The Mg(2+) site is built by glutamate 272 and glutamate 284. Residues aspartate 291, lysine 360, and 367–368 (RR) each bind N(1)-(5-phospho-beta-D-ribosyl)glycinamide.

This sequence belongs to the PurK/PurT family. In terms of assembly, homodimer.

The enzyme catalyses N(1)-(5-phospho-beta-D-ribosyl)glycinamide + formate + ATP = N(2)-formyl-N(1)-(5-phospho-beta-D-ribosyl)glycinamide + ADP + phosphate + H(+). It participates in purine metabolism; IMP biosynthesis via de novo pathway; N(2)-formyl-N(1)-(5-phospho-D-ribosyl)glycinamide from N(1)-(5-phospho-D-ribosyl)glycinamide (formate route): step 1/1. In terms of biological role, involved in the de novo purine biosynthesis. Catalyzes the transfer of formate to 5-phospho-ribosyl-glycinamide (GAR), producing 5-phospho-ribosyl-N-formylglycinamide (FGAR). Formate is provided by PurU via hydrolysis of 10-formyl-tetrahydrofolate. The sequence is that of Formate-dependent phosphoribosylglycinamide formyltransferase from Methylococcus capsulatus (strain ATCC 33009 / NCIMB 11132 / Bath).